We begin with the raw amino-acid sequence, 278 residues long: Splicing factor YJU2 (278 aa).

4 residues coordinate Zn(2+): Cys-51, Cys-54, Cys-88, and Cys-91. The disordered stretch occupies residues 228 to 278 (HRQRTNKPGNNNDEKRTPLFNPTSTKGKIQKKSSVRTNPLGIVIKRGKSLK). Short sequence motifs (nuclear localization signal) lie at residues 242–258 (KRTP…KIQK) and 260–278 (SSVR…KSLK).

The protein belongs to the CWC16 family. YJU2 subfamily. Component of the spliceosome. Present in the activated B complex, the catalytically activated B* complex which catalyzes the branching, the catalytic step 1 C complex catalyzing the exon ligation, and the postcatalytic P complex containing the ligated exons (mRNA) and the excised lariat intron. Interacts (via C-terminus) with CLF1. Interacts (via N-terminus) with SYF1. Interacts with U2 snRNA; this interaction is direct. Identified in the CWC complex (or CEF1-associated complex), a spliceosome sub-complex reminiscent of a late-stage spliceosome composed of the U2, U5 and U6 snRNAs and at least BUD13, BUD31, BRR2, CDC40, CEF1, CLF1, CUS1, CWC2, CWC15, CWC21, CWC22, CWC23, CWC24, CWC25, CWC27, ECM2, HSH155, IST3, ISY1, LEA1, MSL1, NTC20, PRP8, PRP9, PRP11, PRP19, PRP21, PRP22, PRP45, PRP46, SLU7, SMB1, SMD1, SMD2, SMD3, SMX2, SMX3, SNT309, SNU114, SPP2, SYF1, SYF2, RSE1 and YJU2.

The protein localises to the nucleus. Its function is as follows. Part of the spliceosome which catalyzes two sequential transesterification reactions, first the excision of the non-coding intron from pre-mRNA and then the ligation of the coding exons to form the mature mRNA. Plays a role (via N-terminus) in stabilizing the structure of the spliceosome catalytic core and docking of the branch helix into the active site, producing 5'-exon and lariat intron-3'-intermediates. Further stabilizes spliceosome conformation for 3'-splice site docking (via C-terminus) promoting exon ligation. This is Splicing factor YJU2 from Saccharomyces cerevisiae (strain ATCC 204508 / S288c) (Baker's yeast).